The sequence spans 301 residues: tRNA pseudouridine synthase B (301 aa).

The Nucleophile role is filled by D38.

It belongs to the pseudouridine synthase TruB family. Type 1 subfamily.

It carries out the reaction uridine(55) in tRNA = pseudouridine(55) in tRNA. Functionally, responsible for synthesis of pseudouridine from uracil-55 in the psi GC loop of transfer RNAs. This is tRNA pseudouridine synthase B from Ehrlichia canis (strain Jake).